The sequence spans 290 residues: Ribosomal RNA small subunit methyltransferase A (290 aa).

6 residues coordinate S-adenosyl-L-methionine: Asn-27, Leu-29, Gly-54, Glu-75, Asp-100, and Asn-125.

Belongs to the class I-like SAM-binding methyltransferase superfamily. rRNA adenine N(6)-methyltransferase family. RsmA subfamily.

The protein resides in the cytoplasm. It carries out the reaction adenosine(1518)/adenosine(1519) in 16S rRNA + 4 S-adenosyl-L-methionine = N(6)-dimethyladenosine(1518)/N(6)-dimethyladenosine(1519) in 16S rRNA + 4 S-adenosyl-L-homocysteine + 4 H(+). In terms of biological role, specifically dimethylates two adjacent adenosines (A1518 and A1519) in the loop of a conserved hairpin near the 3'-end of 16S rRNA in the 30S particle. May play a critical role in biogenesis of 30S subunits. In Streptococcus pneumoniae (strain JJA), this protein is Ribosomal RNA small subunit methyltransferase A.